Reading from the N-terminus, the 31-residue chain is Chassatide C6 (31 aa).

Positions 1-31 (GVIPCGESCVFIPCISSVIGCSCKNKVCYRN) form a cross-link, cyclopeptide (Gly-Asn). 3 disulfides stabilise this stretch: Cys5/Cys21, Cys9/Cys23, and Cys14/Cys28.

This is a cyclic peptide. As to expression, expressed in fruit, pedicel, root and stem but not in leaf (at protein level).

Probably participates in a plant defense mechanism. In Chassalia chartacea (Chassalia curviflora), this protein is Chassatide C6.